The chain runs to 199 residues: Recombination protein RecR (199 aa).

The C4-type zinc-finger motif lies at 59-74; sequence CLNCGNVGTSDICALC. A Toprim domain is found at 82–176; that stretch reads GELCVVEDVA…KLTSLAQGVP (95 aa).

This sequence belongs to the RecR family.

Functionally, may play a role in DNA repair. It seems to be involved in an RecBC-independent recombinational process of DNA repair. It may act with RecF and RecO. This Ruegeria sp. (strain TM1040) (Silicibacter sp.) protein is Recombination protein RecR.